The sequence spans 217 residues: ATP-dependent Clp protease proteolytic subunit 2 (217 aa).

The Nucleophile role is filled by Ser121. The active site involves His146.

Belongs to the peptidase S14 family. Fourteen ClpP subunits assemble into 2 heptameric rings which stack back to back to give a disk-like structure with a central cavity, resembling the structure of eukaryotic proteasomes.

The protein resides in the cytoplasm. It catalyses the reaction Hydrolysis of proteins to small peptides in the presence of ATP and magnesium. alpha-casein is the usual test substrate. In the absence of ATP, only oligopeptides shorter than five residues are hydrolyzed (such as succinyl-Leu-Tyr-|-NHMec, and Leu-Tyr-Leu-|-Tyr-Trp, in which cleavage of the -Tyr-|-Leu- and -Tyr-|-Trp bonds also occurs).. In terms of biological role, cleaves peptides in various proteins in a process that requires ATP hydrolysis. Has a chymotrypsin-like activity. Plays a major role in the degradation of misfolded proteins. The sequence is that of ATP-dependent Clp protease proteolytic subunit 2 from Paraburkholderia xenovorans (strain LB400).